Reading from the N-terminus, the 94-residue chain is Small ribosomal subunit protein uS19c (94 aa).

The protein belongs to the universal ribosomal protein uS19 family.

Its subcellular location is the plastid. The protein resides in the chloroplast. In terms of biological role, protein S19 forms a complex with S13 that binds strongly to the 16S ribosomal RNA. This Cyanidioschyzon merolae (strain NIES-3377 / 10D) (Unicellular red alga) protein is Small ribosomal subunit protein uS19c.